Reading from the N-terminus, the 285-residue chain is Bifunctional protein FolD (285 aa).

NADP(+)-binding positions include 165–167 (GAS) and isoleucine 232.

The protein belongs to the tetrahydrofolate dehydrogenase/cyclohydrolase family. Homodimer.

The enzyme catalyses (6R)-5,10-methylene-5,6,7,8-tetrahydrofolate + NADP(+) = (6R)-5,10-methenyltetrahydrofolate + NADPH. The catalysed reaction is (6R)-5,10-methenyltetrahydrofolate + H2O = (6R)-10-formyltetrahydrofolate + H(+). It participates in one-carbon metabolism; tetrahydrofolate interconversion. Functionally, catalyzes the oxidation of 5,10-methylenetetrahydrofolate to 5,10-methenyltetrahydrofolate and then the hydrolysis of 5,10-methenyltetrahydrofolate to 10-formyltetrahydrofolate. The protein is Bifunctional protein FolD of Sulfurihydrogenibium sp. (strain YO3AOP1).